A 451-amino-acid polypeptide reads, in one-letter code: Sex peptide receptor-related protein 2 (451 aa).

Topologically, residues 1 to 63 are extracellular; it reads MNYEVYCGNA…DNLEIVVYGQ (63 aa). N15 carries an N-linked (GlcNAc...) asparagine glycan. Residues 64-84 form a helical membrane-spanning segment; the sequence is IFPILVLFAVFANAAVALVLS. At 85–97 the chain is on the cytoplasmic side; sequence KKHMITPTNVVLK. Residues 98 to 118 form a helical membrane-spanning segment; it reads YMAIAELLVGLVPLPWTLFFF. Residues 119-140 lie on the Extracellular side of the membrane; that stretch reads SMGNIKETHRLELWWCYLQKYS. C134 and C225 form a disulfide bridge. A helical transmembrane segment spans residues 141-161; the sequence is MDAFPPVFHMIAMWLTVLLAA. At 162–183 the chain is on the cytoplasmic side; that stretch reads QRYVSISHPLHSRSACNVKNVR. Residues 184–204 traverse the membrane as a helical segment; sequence LATMIITVTSFLCGLPKSFDY. Residues 205 to 251 lie on the Extracellular side of the membrane; that stretch reads EYETVHGWIYSHGNWTYASSCVMMPTAILTNMGQTVYFNIYFWTRAL. N218 carries N-linked (GlcNAc...) asparagine glycosylation. A helical membrane pass occupies residues 252 to 272; that stretch reads GFIILPSFLLVLLNGLLIKGI. Topologically, residues 273 to 301 are cytoplasmic; sequence RRAQRRKLRLLREKRSEEAARQRDSNSTS. The helical transmembrane segment at 302–322 threads the bilayer; the sequence is LMLVAIVSIFLIVNLPQAIFM. Residues 323 to 334 lie on the Extracellular side of the membrane; the sequence is GLLCVCETFTIK. Residues 335 to 355 form a helical membrane-spanning segment; the sequence is IPILEGTFPAVFLIASNMIVI. At 356-451 the chain is on the cytoplasmic side; the sequence is ATYPINFGIY…TQFTTMDRSD (96 aa).

The protein belongs to the G-protein coupled receptor 1 family. In terms of tissue distribution, expressed in head neurons including the ASE sensory neurons and the ASI and AWB chemosensory neurons, the midbody neurons SDQ, and motor neurons in the tail.

Its subcellular location is the cell membrane. G-protein coupled receptor for the neuropeptide like protein nlp-38. Plays a role in several types of aversive gustatory associative learning including gustatory plasticity and salt avoidance learning. Its role in salt avoidance learning may be through activation of the transcription factor crh-1/CREB and de novo transcription and translation, which in turn promotes the formation of long-term memory. This is Sex peptide receptor-related protein 2 from Caenorhabditis elegans.